Here is a 274-residue protein sequence, read N- to C-terminus: NH(3)-dependent NAD(+) synthetase (274 aa).

46 to 53 serves as a coordination point for ATP; the sequence is GISGGQDS. Asp-52 provides a ligand contact to Mg(2+). Arg-140 is a binding site for deamido-NAD(+). Thr-160 provides a ligand contact to ATP. Position 165 (Glu-165) interacts with Mg(2+). Deamido-NAD(+)-binding residues include Lys-173 and Asp-180. Residues Lys-189 and Thr-211 each contribute to the ATP site. 260–261 is a binding site for deamido-NAD(+); sequence HK.

The protein belongs to the NAD synthetase family. As to quaternary structure, homodimer.

The enzyme catalyses deamido-NAD(+) + NH4(+) + ATP = AMP + diphosphate + NAD(+) + H(+). It participates in cofactor biosynthesis; NAD(+) biosynthesis; NAD(+) from deamido-NAD(+) (ammonia route): step 1/1. Its function is as follows. Catalyzes the ATP-dependent amidation of deamido-NAD to form NAD. Uses ammonia as a nitrogen source. This is NH(3)-dependent NAD(+) synthetase from Lysinibacillus sphaericus (strain C3-41).